The chain runs to 163 residues: Epithelial membrane protein 3 (163 aa).

A helical membrane pass occupies residues 4–24 (LLLVVSALHILILILLFVATL). N-linked (GlcNAc...) asparagine glycans are attached at residues Asn47 and Asn56. Helical transmembrane passes span 66 to 86 (VQVL…LFMF), 100 to 120 (TGLC…IYAI), and 139 to 159 (FALA…YIHL).

The protein belongs to the PMP-22/EMP/MP20 family.

The protein resides in the membrane. Probably involved in cell proliferation and cell-cell interactions. This Homo sapiens (Human) protein is Epithelial membrane protein 3 (EMP3).